The following is a 246-amino-acid chain: Probable phosphatase Tola_0828 (246 aa).

9 residues coordinate Zn(2+): H8, H10, H16, H41, E74, H102, H132, D193, and H195.

The protein belongs to the PHP family. Zn(2+) serves as cofactor.

This Tolumonas auensis (strain DSM 9187 / NBRC 110442 / TA 4) protein is Probable phosphatase Tola_0828.